The primary structure comprises 130 residues: Fluoride-specific ion channel FluC (130 aa).

4 helical membrane-spanning segments follow: residues 4 to 24, 35 to 55, 68 to 88, and 99 to 119; these read MINV…RYFI, GFPI…GLLT, LNLF…TFSL, and AVFG…GVVL. Residues G78 and T81 each contribute to the Na(+) site.

The protein belongs to the fluoride channel Fluc/FEX (TC 1.A.43) family.

The protein localises to the cell membrane. It catalyses the reaction fluoride(in) = fluoride(out). With respect to regulation, na(+) is not transported, but it plays an essential structural role and its presence is essential for fluoride channel function. Fluoride-specific ion channel. Important for reducing fluoride concentration in the cell, thus reducing its toxicity. In Ruminiclostridium cellulolyticum (strain ATCC 35319 / DSM 5812 / JCM 6584 / H10) (Clostridium cellulolyticum), this protein is Fluoride-specific ion channel FluC.